Reading from the N-terminus, the 359-residue chain is Peptide chain release factor 1 (359 aa).

N5-methylglutamine is present on Gln-236.

Belongs to the prokaryotic/mitochondrial release factor family. Post-translationally, methylated by PrmC. Methylation increases the termination efficiency of RF1.

The protein resides in the cytoplasm. Peptide chain release factor 1 directs the termination of translation in response to the peptide chain termination codons UAG and UAA. The protein is Peptide chain release factor 1 of Streptococcus pneumoniae (strain Hungary19A-6).